Consider the following 446-residue polypeptide: Coagulation factor VII (446 aa).

An N-terminal signal peptide occupies residues 1-24 (MVPQAHGLLLLCFLLQLQGPLGTA). A propeptide spanning residues 25–41 (VFITQEEAHGVLHRQRR) is cleaved from the precursor. The region spanning 42 to 86 (ANSLLEELWPGSLERECNEEQCSFEEAREIFKSPERTKQFWIVYS) is the Gla domain. 4-carboxyglutamate is present on residues Glu-47, Glu-48, Glu-55, Glu-57, Glu-60, Glu-61, Glu-66, Glu-67, Glu-70, and Glu-76. A disulfide bridge links Cys-58 with Cys-63. An EGF-like 1; calcium-binding domain is found at 87–123 (DGDQCASNPCQNGGTCQDHLKSYVCFCLLDFEGRNCE). 10 disulfide bridges follow: Cys-91–Cys-102, Cys-96–Cys-111, Cys-113–Cys-122, Cys-132–Cys-143, Cys-139–Cys-153, Cys-155–Cys-168, Cys-176–Cys-303, Cys-200–Cys-205, Cys-219–Cys-235, and Cys-351–Cys-370. Residue Ser-93 is glycosylated (O-linked (Glc...) serine; alternate). Residue Ser-93 is glycosylated (O-linked (Xyl...) serine; alternate). Residue Asp-104 is modified to (3R)-3-hydroxyaspartate. The 42-residue stretch at 128 to 169 (EQLICANENGDCDQYCRDHVGTKRTCSCHEDYTLQPDEVSCK) folds into the EGF-like 2 domain. N-linked (GlcNAc...) asparagine glycosylation occurs at Asn-186. Positions 194–433 (IVGGNVCPKG…YIDWLVRHMD (240 aa)) constitute a Peptidase S1 domain. The active-site Charge relay system is His-234. An N-linked (GlcNAc...) asparagine glycan is attached at Asn-244. Asp-283 (charge relay system) is an active-site residue. Asp-379 contributes to the substrate binding site. The cysteines at positions 381 and 409 are disulfide-linked. Ser-385 serves as the catalytic Charge relay system.

Belongs to the peptidase S1 family. In terms of assembly, heterodimer of a light chain and a heavy chain linked by a disulfide bond. The vitamin K-dependent, enzymatic carboxylation of some glutamate residues allows the modified protein to bind calcium. In terms of processing, the iron and 2-oxoglutarate dependent 3-hydroxylation of aspartate and asparagine is (R) stereospecific within EGF domains. Post-translationally, can be either O-glucosylated or O-xylosylated at Ser-93 by POGLUT1. In terms of tissue distribution, plasma and liver.

Its subcellular location is the secreted. It catalyses the reaction Selective cleavage of Arg-|-Ile bond in factor X to form factor Xa.. Functionally, initiates the extrinsic pathway of blood coagulation. Serine protease that circulates in the blood in a zymogen form. Factor VII is converted to factor VIIa by factor Xa, factor XIIa, factor IXa, or thrombin by minor proteolysis. In the presence of tissue factor and calcium ions, factor VIIa then converts factor X to factor Xa by limited proteolysis. Factor VIIa also converts factor IX to factor IXa in the presence of tissue factor and calcium. The chain is Coagulation factor VII (F7) from Mus musculus (Mouse).